Consider the following 341-residue polypeptide: Methionine import ATP-binding protein MetN 1 (341 aa).

Residues 2 to 241 (IEFRQVSKSF…PKTTIAQNFV (240 aa)) form the ABC transporter domain. 38-45 (GYSGAGKS) provides a ligand contact to ATP.

This sequence belongs to the ABC transporter superfamily. Methionine importer (TC 3.A.1.24) family. As to quaternary structure, the complex is composed of two ATP-binding proteins (MetN), two transmembrane proteins (MetI) and a solute-binding protein (MetQ).

It is found in the cell membrane. The catalysed reaction is L-methionine(out) + ATP + H2O = L-methionine(in) + ADP + phosphate + H(+). It carries out the reaction D-methionine(out) + ATP + H2O = D-methionine(in) + ADP + phosphate + H(+). Part of the ABC transporter complex MetNIQ involved in methionine import. Responsible for energy coupling to the transport system. This Staphylococcus aureus (strain bovine RF122 / ET3-1) protein is Methionine import ATP-binding protein MetN 1.